The chain runs to 197 residues: Glycerol-3-phosphate acyltransferase (197 aa).

Transmembrane regions (helical) follow at residues Met-1 to Val-21, Leu-69 to Gly-89, Val-110 to Leu-130, and Val-152 to Phe-172.

The protein belongs to the PlsY family. As to quaternary structure, probably interacts with PlsX.

The protein localises to the cell membrane. It carries out the reaction an acyl phosphate + sn-glycerol 3-phosphate = a 1-acyl-sn-glycero-3-phosphate + phosphate. The protein operates within lipid metabolism; phospholipid metabolism. Its function is as follows. Catalyzes the transfer of an acyl group from acyl-phosphate (acyl-PO(4)) to glycerol-3-phosphate (G3P) to form lysophosphatidic acid (LPA). This enzyme utilizes acyl-phosphate as fatty acyl donor, but not acyl-CoA or acyl-ACP. This chain is Glycerol-3-phosphate acyltransferase, found in Geobacillus kaustophilus (strain HTA426).